We begin with the raw amino-acid sequence, 686 residues long: Methionine--tRNA ligase (686 aa).

A 'HIGH' region motif is present at residues 15-25; sequence PYANGPIHLGH. Zn(2+) is bound by residues cysteine 146, cysteine 149, cysteine 159, and cysteine 162. The 'KMSKS' region motif lies at 331–335; that stretch reads KMSKS. Lysine 334 provides a ligand contact to ATP. The 103-residue stretch at 584 to 686 folds into the tRNA-binding domain; that stretch reads DFAKIDLRVA…AGVKAGSRVM (103 aa).

This sequence belongs to the class-I aminoacyl-tRNA synthetase family. MetG type 1 subfamily. As to quaternary structure, homodimer. The cofactor is Zn(2+).

It localises to the cytoplasm. The catalysed reaction is tRNA(Met) + L-methionine + ATP = L-methionyl-tRNA(Met) + AMP + diphosphate. In terms of biological role, is required not only for elongation of protein synthesis but also for the initiation of all mRNA translation through initiator tRNA(fMet) aminoacylation. This is Methionine--tRNA ligase from Mannheimia succiniciproducens (strain KCTC 0769BP / MBEL55E).